The primary structure comprises 258 residues: Transmembrane O-methyltransferase homolog (258 aa).

S-adenosyl-L-methionine contacts are provided by residues glutamate 104, 106 to 107, serine 112, glutamate 130, and serine 160; that span reads GT.

Belongs to the class I-like SAM-binding methyltransferase superfamily. Cation-dependent O-methyltransferase family. As to quaternary structure, interacts with LHFPL5, PCDH15, TMC1, TMC2 and TMIE. The interaction of TOMT with TMC1 and TMC2 is required for the transportation of TMC1/2 into the stereocilia of hair cells. Interacts directly with TMC1. Widely expressed with high levels in outer and inner hair cells of the cochlea and vestibule.

The protein localises to the cytoplasm. Its subcellular location is the endoplasmic reticulum. The catalysed reaction is a catechol + S-adenosyl-L-methionine = a guaiacol + S-adenosyl-L-homocysteine + H(+). Functionally, catalyzes the O-methylation, and thereby the inactivation, of catecholamine neurotransmitters and catechol hormones. Required for auditory function. Component of the cochlear hair cell's mechanotransduction (MET) machinery. Involved in the assembly of the asymmetric tip-link MET complex. Required for transportation of TMC1 and TMC2 proteins into the mechanically sensitive stereocilia of the hair cells. The function in MET is independent of the enzymatic activity. The protein is Transmembrane O-methyltransferase homolog of Mus musculus (Mouse).